A 207-amino-acid chain; its full sequence is Large ribosomal subunit protein bL25 (207 aa).

The disordered stretch occupies residues 171–207 (EEETVVTVSAPRAEEEPTTTEAPEPEAVHGNDEEPVE). Residues 196–207 (EAVHGNDEEPVE) show a composition bias toward basic and acidic residues.

The protein belongs to the bacterial ribosomal protein bL25 family. CTC subfamily. As to quaternary structure, part of the 50S ribosomal subunit; part of the 5S rRNA/L5/L18/L25 subcomplex. Contacts the 5S rRNA. Binds to the 5S rRNA independently of L5 and L18.

This is one of the proteins that binds to the 5S RNA in the ribosome where it forms part of the central protuberance. The sequence is that of Large ribosomal subunit protein bL25 from Listeria innocua serovar 6a (strain ATCC BAA-680 / CLIP 11262).